Here is a 438-residue protein sequence, read N- to C-terminus: Ubiquitin carboxyl-terminal hydrolase 27 (438 aa).

Residues 78 to 421 enclose the USP domain; sequence RGLINLGNTC…EGYLLFYHKQ (344 aa). Cysteine 87 (nucleophile) is an active-site residue. The active-site Proton acceptor is the histidine 380.

The protein belongs to the peptidase C19 family. As to quaternary structure, interacts with phosphorylated BCL2L11 isoform BIMEL; this interaction leads to BCL2L11 deubiquitination and stabilization.

It is found in the cytoplasm. Its subcellular location is the cytosol. The protein localises to the nucleus. The enzyme catalyses Thiol-dependent hydrolysis of ester, thioester, amide, peptide and isopeptide bonds formed by the C-terminal Gly of ubiquitin (a 76-residue protein attached to proteins as an intracellular targeting signal).. In terms of biological role, deubiquitinase involved in innate antiviral immunity by mediating deubiquitination of CGAS and RIGI. Negatively regulates RIGI by mediating 'Lys-63'-linked deubiquitination of RIGI, inhibiting type I interferon signaling. Also regulates 'Lys-63'-linked ubiquitination level of MDA5/IFIH1. Acts as a positive regulator of the cGAS-STING pathway by catalyzing 'Lys-48'-linked deubiquitination of CGAS, thereby promoting its stabilization. Can reduce the levels of BCL2L11/BIM ubiquitination and stabilize BCL2L11 in response to the RAF-MAPK-degradation signal. By acting on BCL2L11 levels, may counteract the anti-apoptotic effects of MAPK activity. The sequence is that of Ubiquitin carboxyl-terminal hydrolase 27 from Homo sapiens (Human).